The following is a 282-amino-acid chain: MEMO1 family protein Cmaq_1590 (282 aa).

The protein belongs to the MEMO1 family.

The polypeptide is MEMO1 family protein Cmaq_1590 (Caldivirga maquilingensis (strain ATCC 700844 / DSM 13496 / JCM 10307 / IC-167)).